A 454-amino-acid chain; its full sequence is Probable xylan O-acetyltransferase 9 (454 aa).

Residues 1 to 15 (MKAPPPPSPVAKRAR) are Cytoplasmic-facing. Residues 16-36 (VSPFVFLLVLFLLLFSFLYGE) traverse the membrane as a helical; Signal-anchor for type II membrane protein segment. Topologically, residues 37–454 (DLKELLGSQA…ELLYTKLFYP (418 aa)) are lumenal. Cystine bridges form between Cys101–Cys152, Cys123–Cys188, Cys132–Cys435, and Cys352–Cys431. A GDS motif motif is present at residues 175 to 177 (GDS). The active-site Nucleophile is the Ser177. N-linked (GlcNAc...) asparagine glycans are attached at residues Asn219, Asn293, and Asn394. Asp430 acts as the Proton donor in catalysis. Residues 430-433 (DCVH) carry the DXXH motif motif. The active-site Proton acceptor is the His433.

This sequence belongs to the PC-esterase family. TBL subfamily.

The protein localises to the golgi apparatus membrane. Functionally, probable xylan acetyltransferase required for 2-O- and 3-O-monoacetylation of xylosyl residues in xylan. Possesses extremely low activity in vitro. The polypeptide is Probable xylan O-acetyltransferase 9 (Oryza sativa subsp. japonica (Rice)).